A 294-amino-acid polypeptide reads, in one-letter code: Small ribosomal subunit biogenesis GTPase RsgA 2, mitochondrial (294 aa).

The N-terminal 68 residues, 1 to 68 (MQTFSSAAAL…RSFLAPVLPL (68 aa)), are a transit peptide targeting the mitochondrion. The region spanning 155–294 (VSEVLDPPVA…VSFFLSYFIL (140 aa)) is the CP-type G domain. Residue 255–263 (GPSGVGKSS) coordinates GTP.

Belongs to the TRAFAC class YlqF/YawG GTPase family.

It localises to the mitochondrion. In Arabidopsis thaliana (Mouse-ear cress), this protein is Small ribosomal subunit biogenesis GTPase RsgA 2, mitochondrial.